A 739-amino-acid polypeptide reads, in one-letter code: Exocyst complex component 3-like protein (739 aa).

2 disordered regions span residues 1 to 21 (MDSK…PEWP) and 698 to 718 (AALS…RRAL). The segment at 1-370 (MDSKIQPTLR…DVSQLEPLLT (370 aa)) is mediates interaction with EXOC2, EXOC4 and EXOC5.

Belongs to the SEC6 family. As to quaternary structure, interacts with EXOC2, EXOC4 and EXOC5; may be part of the exocyst. Ubiquitously expressed.

Its subcellular location is the cytoplasmic vesicle. The protein resides in the secretory vesicle. Its function is as follows. As part of the exocyst, may play a role in regulated exocytosis of insulin granules. The protein is Exocyst complex component 3-like protein (Exoc3l1) of Mus musculus (Mouse).